Here is a 392-residue protein sequence, read N- to C-terminus: Acetyl-CoA acetyltransferase (392 aa).

Cysteine 89 functions as the Acyl-thioester intermediate in the catalytic mechanism. Residues histidine 348 and cysteine 378 each act as proton acceptor in the active site.

This sequence belongs to the thiolase-like superfamily. Thiolase family. In terms of assembly, homotetramer.

It localises to the cytoplasm. The enzyme catalyses 2 acetyl-CoA = acetoacetyl-CoA + CoA. It functions in the pathway biopolymer metabolism; poly-(R)-3-hydroxybutanoate biosynthesis. It participates in metabolic intermediate biosynthesis; (R)-mevalonate biosynthesis; (R)-mevalonate from acetyl-CoA: step 1/3. The chain is Acetyl-CoA acetyltransferase from Shinella zoogloeoides (Crabtreella saccharophila).